The sequence spans 1120 residues: Terminal uridylyltransferase 1 (1120 aa).

2 disordered regions span residues 1–156 (MSKY…SAVE) and 196–221 (AALI…PHTP). A compositionally biased stretch (polar residues) spans 7-16 (LFNQGTKDGT). Residues 17-59 (NASSGSEANSANITSSSAPASSTNTSSPTSSESAVVSPPASTS) are compositionally biased toward low complexity. The segment covering 60–70 (PRRRLIHRRHG) has biased composition (basic residues). Basic and acidic residues predominate over residues 90–103 (NEEKHENFISDSVH). Polar residues predominate over residues 118–128 (LTTSGSETVMS). 2 stretches are compositionally biased toward low complexity: residues 134-154 (AFEA…STSA) and 207-217 (SSAVSSSSSGS). Residues 222-253 (PRLFTCDMCLQYVSTSYEALEQHALDQHGDAL) form a C2H2-type; atypical zinc finger. Zn(2+) is bound by residues Cys-227, Cys-230, His-244, and His-249. Residues Ser-330 and 341–344 (SDID) each bind UTP. Mg(2+)-binding residues include Asp-342 and Asp-344. RNA is bound at residue Arg-390. Asp-548 contributes to the Mg(2+) binding site. Residues 555–559 (GIRNS), Lys-580, Lys-584, and 598–599 (SY) each bind UTP. The region spanning 659 to 697 (GELLLGFFYYYAFEFDWVNHVVSLNRPGITTKASLGWDV) is the PAP-associated domain. The interval 750–1120 (GMMASSASAA…ARRVLRLLFR (371 aa)) is important for catalytic activity and RNA binding. The short motif at 773–782 (IEDPYEENLN) is the Nucleotide recognition motif (NRM) element. An involved in oligomerization region spans residues 800–900 (YRGLLSLLKD…LLSDLEAAFL (101 aa)). The segment at 1047–1076 (PSTTTQGEDPLASGTCEQGGVSPSLPTGAP) is disordered.

This sequence belongs to the DNA polymerase type-B-like family. In terms of assembly, homotetramer. Part of a 700kDa complex. Interacts with p45 and p50 RNA ligases. The cofactor is Mg(2+). Mn(2+) is required as a cofactor.

The protein resides in the mitochondrion. The catalysed reaction is RNA(n) + UTP = RNA(n)-3'-uridine ribonucleotide + diphosphate. Zinc-binding is required for catalytic activity. Its function is as follows. Terminal uridylyltransferase which is involved in the post-transcriptional editing of mitochondrial RNA, a process involving the addition and deletion of uridine (U) nucleotides in the pre-mRNA. Specifically, catalyzes the addition of Us to the 3'-hydroxyl group of guided RNA (gRNA), with a preference for RNAs terminating in 6 Us, but also can add Us to RNAs terminating in 6 adenines (A), 6 cytosines (C), or 6 guanines (G). Can mediate RNA-independent UTP polymerization in vitro. Can mediate pyrophosphate-dependent degradation of synthetic RNA ending with U residues in vitro. This chain is Terminal uridylyltransferase 1, found in Leishmania tarentolae (Sauroleishmania tarentolae).